Reading from the N-terminus, the 401-residue chain is Keratin-associated protein 10-4 (401 aa).

Tandem repeats lie at residues 36 to 40 (CCEPP), 41 to 45 (CCAPS), 46 to 50 (CCAPA), 67 to 71 (CCPVT), 89 to 93 (CCQQS), 99 to 103 (CCASS), 109 to 113 (CCVPV), 114 to 118 (CCKTV), 119 to 123 (CCKPV), 124 to 128 (CCVPV), 129 to 133 (CCGDS), 135 to 139 (CCQQS), 145 to 149 (CCTSS), 155 to 159 (CCVPI), 160 to 164 (CCKPV), 172 to 176 (CCQQS), 186 to 190 (CCQAV), 208 to 212 (CCQQS), 218 to 222 (CCTSS), 228 to 232 (CCVPV), 233 to 237 (CCKTV), 238 to 242 (CCKPV), 250 to 254 (CCQQS), 270 to 274 (CCVPV), 275 to 279 (CCKPV), 280 to 284 (CCKPV), 297 to 301 (CCQQS), 307 to 311 (CCTSS), 317 to 321 (CCVPV), 322 to 326 (CCKPV), 339 to 343 (CCQQS), 349 to 353 (CCTTS), 354 to 358 (CCRPS), 373 to 377 (CCVPV), and 391 to 395 (CCRPA). Residues 36-395 (CCEPPCCAPS…SCQPSCCRPA (360 aa)) are 36 X 5 AA repeats of C-C-X(3).

This sequence belongs to the KRTAP type 10 family. As to quaternary structure, interacts with hair keratins. As to expression, restricted to hair root, not detected in any other tissues.

Its function is as follows. In the hair cortex, hair keratin intermediate filaments are embedded in an interfilamentous matrix, consisting of hair keratin-associated proteins (KRTAP), which are essential for the formation of a rigid and resistant hair shaft through their extensive disulfide bond cross-linking with abundant cysteine residues of hair keratins. The matrix proteins include the high-sulfur and high-glycine-tyrosine keratins. This is Keratin-associated protein 10-4 (KRTAP10-4) from Homo sapiens (Human).